Consider the following 179-residue polypeptide: Inosine/xanthosine triphosphatase (179 aa).

8–13 (TTNPAK) provides a ligand contact to substrate. The Mg(2+) site is built by Asp-38 and Glu-68. Residue 68–69 (EA) coordinates substrate.

The protein belongs to the YjjX NTPase family. Homodimer. The cofactor is Mg(2+). Mn(2+) serves as cofactor.

The enzyme catalyses XTP + H2O = XDP + phosphate + H(+). It catalyses the reaction ITP + H2O = IDP + phosphate + H(+). Its function is as follows. Phosphatase that hydrolyzes non-canonical purine nucleotides such as XTP and ITP to their respective diphosphate derivatives. Probably excludes non-canonical purines from DNA/RNA precursor pool, thus preventing their incorporation into DNA/RNA and avoiding chromosomal lesions. This chain is Inosine/xanthosine triphosphatase, found in Proteus mirabilis (strain HI4320).